Here is a 184-residue protein sequence, read N- to C-terminus: Copper transporter 6 (184 aa).

Residues 1–25 (MRGMGDDGMGPMAMAPPRSGHATAA) are compositionally biased toward low complexity. The interval 1-27 (MRGMGDDGMGPMAMAPPRSGHATAAAP) is disordered. Transmembrane regions (helical) follow at residues 64–84 (YALC…LSVL) and 124–144 (MAYL…LAAV).

The protein belongs to the copper transporter (Ctr) (TC 1.A.56) family. SLC31A subfamily.

It localises to the membrane. Involved in the transport of copper. The chain is Copper transporter 6 (COPT6) from Oryza sativa subsp. japonica (Rice).